A 359-amino-acid chain; its full sequence is Uracil-DNA glycosylase (359 aa).

The transit peptide at 1–21 directs the protein to the mitochondrion; the sequence is MWCMRRLPTNSVMTVARKRKQ. Aspartate 162 acts as the Proton acceptor in catalysis.

This sequence belongs to the uracil-DNA glycosylase (UDG) superfamily. UNG family.

It localises to the mitochondrion. Its subcellular location is the nucleus. The enzyme catalyses Hydrolyzes single-stranded DNA or mismatched double-stranded DNA and polynucleotides, releasing free uracil.. In terms of biological role, excises uracil residues from the DNA which can arise as a result of misincorporation of dUMP residues by DNA polymerase or due to deamination of cytosine. Not involved in strand-directed mismatch repair. This is Uracil-DNA glycosylase from Saccharomyces cerevisiae (strain ATCC 204508 / S288c) (Baker's yeast).